The primary structure comprises 500 residues: Glycerol kinase (500 aa).

Thr11 is an ADP binding site. 3 residues coordinate ATP: Thr11, Thr12, and Ser13. Thr11 contacts sn-glycerol 3-phosphate. Arg15 lines the ADP pocket. Positions 81, 82, 133, and 242 each coordinate sn-glycerol 3-phosphate. Glycerol-binding residues include Arg81, Glu82, Tyr133, Asp242, and Gln243. Thr264 and Gly307 together coordinate ADP. Residues Thr264, Gly307, Gln311, and Gly411 each coordinate ATP. Gly411 serves as a coordination point for ADP.

This sequence belongs to the FGGY kinase family.

The enzyme catalyses glycerol + ATP = sn-glycerol 3-phosphate + ADP + H(+). The protein operates within polyol metabolism; glycerol degradation via glycerol kinase pathway; sn-glycerol 3-phosphate from glycerol: step 1/1. With respect to regulation, inhibited by fructose 1,6-bisphosphate (FBP). Its function is as follows. Key enzyme in the regulation of glycerol uptake and metabolism. Catalyzes the phosphorylation of glycerol to yield sn-glycerol 3-phosphate. This Bradyrhizobium diazoefficiens (strain JCM 10833 / BCRC 13528 / IAM 13628 / NBRC 14792 / USDA 110) protein is Glycerol kinase.